A 431-amino-acid chain; its full sequence is Serine/threonine-protein kinase Sgk1 (431 aa).

Positions 1–60 (MTVKTEAARGPLTYSRMRGMVAILIAFMKQRRMGLNDFIQKIANNSYACKHTEVQSILKI) are necessary for localization to the mitochondria. A disordered region spans residues 66–92 (PELMNANPSPPPSPSQQINLGPSSNPH). Phosphoserine is present on serine 74. Serine 78 bears the Phosphoserine; by MAPK7 mark. Positions 81–91 (QQINLGPSSNP) are enriched in polar residues. The region spanning 98 to 355 (FHFLKVIGKG…FMEIRNHVFF (258 aa)) is the Protein kinase domain. Residues 104 to 112 (IGKGSFGKV) and lysine 127 contribute to the ATP site. A Nuclear localization signal motif is present at residues 131–141 (KKAILKKKEEK). Residue aspartate 222 is the Proton acceptor of the active site. At threonine 256 the chain carries Phosphothreonine; by PDPK1. Residues 356 to 431 (SLINWDDLIN…SYAPPMDSFL (76 aa)) form the AGC-kinase C-terminal domain. Threonine 369 carries the post-translational modification Phosphothreonine; by PKA. Residues serine 397, serine 401, and serine 422 each carry the phosphoserine modification.

This sequence belongs to the protein kinase superfamily. AGC Ser/Thr protein kinase family. Homodimer; disulfide-linked. Forms a trimeric complex with FBXW7 and NOTCH1. Interacts with MAPK3/ERK1, MAPK1/ERK2, MAP2K1/MEK1, MAP2K2/MEK2, NEDD4, NEDD4L, MAPT/TAU, MAPK7, CREB1, SLC9A3R2/NHERF2 and KCNJ1/ROMK1. Associates with the mammalian target of rapamycin complex 2 (mTORC2) via an interaction with MAPKAP1/SIN1. Regulated by phosphorylation. Activated by phosphorylation on Ser-422 by mTORC2, transforming it into a substrate for PDPK1 which phosphorylates it on Thr-256. Phosphorylation on Ser-397 and Ser-401 are also essential for its activity. Phosphorylation on Ser-78 by MAPK7 is required for growth factor-induced cell cycle progression. In terms of processing, ubiquitinated by NEDD4L; which promotes proteasomal degradation. Ubiquitinated by SYVN1 at the endoplasmic reticulum; which promotes rapid proteasomal degradation and maintains a high turnover rate in resting cells.

The protein localises to the cytoplasm. Its subcellular location is the nucleus. The protein resides in the endoplasmic reticulum membrane. It is found in the cell membrane. It localises to the mitochondrion. The enzyme catalyses L-seryl-[protein] + ATP = O-phospho-L-seryl-[protein] + ADP + H(+). The catalysed reaction is L-threonyl-[protein] + ATP = O-phospho-L-threonyl-[protein] + ADP + H(+). With respect to regulation, two specific sites, one in the kinase domain (Thr-256) and the other in the C-terminal regulatory region (Ser-422), need to be phosphorylated for its full activation. Phosphorylation at Ser-397 and Ser-401 are also essential for its activity. Activated by WNK1, WNK2, WNK3 and WNK4; which promote phosphorylation by mTORC2. Functionally, serine/threonine-protein kinase which is involved in the regulation of a wide variety of ion channels, membrane transporters, cellular enzymes, transcription factors, neuronal excitability, cell growth, proliferation, survival, migration and apoptosis. Plays an important role in cellular stress response. Contributes to regulation of renal Na(+) retention, renal K(+) elimination, salt appetite, gastric acid secretion, intestinal Na(+)/H(+) exchange and nutrient transport, insulin-dependent salt sensitivity of blood pressure, salt sensitivity of peripheral glucose uptake, cardiac repolarization and memory consolidation. Up-regulates Na(+) channels: SCNN1A/ENAC, SCN5A and ASIC1/ACCN2, K(+) channels: KCNJ1/ROMK1, KCNA1-5, KCNQ1-5 and KCNE1, epithelial Ca(2+) channels: TRPV5 and TRPV6, chloride channels: BSND, CLCN2 and CFTR, glutamate transporters: SLC1A3/EAAT1, SLC1A2 /EAAT2, SLC1A1/EAAT3, SLC1A6/EAAT4 and SLC1A7/EAAT5, amino acid transporters: SLC1A5/ASCT2, SLC38A1/SN1 and SLC6A19, creatine transporter: SLC6A8, Na(+)/dicarboxylate cotransporter: SLC13A2/NADC1, Na(+)-dependent phosphate cotransporter: SLC34A2/NAPI-2B, glutamate receptor: GRIK2/GLUR6. Up-regulates carriers: SLC9A3/NHE3, SLC12A1/NKCC2, SLC12A3/NCC, SLC5A3/SMIT, SLC2A1/GLUT1, SLC5A1/SGLT1 and SLC15A2/PEPT2. Regulates enzymes: GSK3A/B, PMM2 and Na(+)/K(+) ATPase, and transcription factors: CTNNB1 and nuclear factor NF-kappa-B. Stimulates sodium transport into epithelial cells by enhancing the stability and expression of SCNN1A/ENAC. This is achieved by phosphorylating the NEDD4L ubiquitin E3 ligase, promoting its interaction with 14-3-3 proteins, thereby preventing it from binding to SCNN1A/ENAC and targeting it for degradation. Regulates store-operated Ca(+2) entry (SOCE) by stimulating ORAI1 and STIM1. Regulates KCNJ1/ROMK1 directly via its phosphorylation or indirectly via increased interaction with SLC9A3R2/NHERF2. Phosphorylates MDM2 and activates MDM2-dependent ubiquitination of p53/TP53. Phosphorylates MAPT/TAU and mediates microtubule depolymerization and neurite formation in hippocampal neurons. Phosphorylates SLC2A4/GLUT4 and up-regulates its activity. Phosphorylates APBB1/FE65 and promotes its localization to the nucleus. Phosphorylates MAPK1/ERK2 and activates it by enhancing its interaction with MAP2K1/MEK1 and MAP2K2/MEK2. Phosphorylates FBXW7 and plays an inhibitory role in the NOTCH1 signaling. Phosphorylates FOXO1 resulting in its relocalization from the nucleus to the cytoplasm. Phosphorylates FOXO3, promoting its exit from the nucleus and interference with FOXO3-dependent transcription. Phosphorylates BRAF and MAP3K3/MEKK3 and inhibits their activity. Phosphorylates SLC9A3/NHE3 in response to dexamethasone, resulting in its activation and increased localization at the cell membrane. Phosphorylates CREB1. Necessary for vascular remodeling during angiogenesis. In Oryctolagus cuniculus (Rabbit), this protein is Serine/threonine-protein kinase Sgk1 (SGK1).